The sequence spans 210 residues: Thymidylate kinase (210 aa).

10–17 (GLEGAGKT) is an ATP binding site.

It belongs to the thymidylate kinase family.

The enzyme catalyses dTMP + ATP = dTDP + ADP. Its function is as follows. Phosphorylation of dTMP to form dTDP in both de novo and salvage pathways of dTTP synthesis. This chain is Thymidylate kinase, found in Actinobacillus succinogenes (strain ATCC 55618 / DSM 22257 / CCUG 43843 / 130Z).